We begin with the raw amino-acid sequence, 119 residues long: Holo-[acyl-carrier-protein] synthase (119 aa).

Residues Asp-8 and Glu-60 each coordinate Mg(2+).

The protein belongs to the P-Pant transferase superfamily. AcpS family. The cofactor is Mg(2+).

Its subcellular location is the cytoplasm. The catalysed reaction is apo-[ACP] + CoA = holo-[ACP] + adenosine 3',5'-bisphosphate + H(+). In terms of biological role, transfers the 4'-phosphopantetheine moiety from coenzyme A to a Ser of acyl-carrier-protein. The protein is Holo-[acyl-carrier-protein] synthase of Staphylococcus haemolyticus (strain JCSC1435).